The chain runs to 371 residues: Aminomethyltransferase (371 aa).

Belongs to the GcvT family. In terms of assembly, the glycine cleavage system is composed of four proteins: P, T, L and H.

It catalyses the reaction N(6)-[(R)-S(8)-aminomethyldihydrolipoyl]-L-lysyl-[protein] + (6S)-5,6,7,8-tetrahydrofolate = N(6)-[(R)-dihydrolipoyl]-L-lysyl-[protein] + (6R)-5,10-methylene-5,6,7,8-tetrahydrofolate + NH4(+). In terms of biological role, the glycine cleavage system catalyzes the degradation of glycine. The sequence is that of Aminomethyltransferase from Cutibacterium acnes (strain DSM 16379 / KPA171202) (Propionibacterium acnes).